A 150-amino-acid polypeptide reads, in one-letter code: MFDWQRFFPFQQFSKDGLKNADPKDVEQYIHHMMKSVFGPGYAVQFPFRDPLSKETSAADESDPIDIFETTSHVFVKIPLTKEQLNLLKIKHTSQTLIIENYPEKGRQEKVVLPSLVRRKGTKAIFKDGILEVMFLKNEDFNLSEIDITF.

Its subcellular location is the spore coat. In terms of biological role, involved in spore germination. This Bacillus licheniformis (strain ATCC 14580 / DSM 13 / JCM 2505 / CCUG 7422 / NBRC 12200 / NCIMB 9375 / NCTC 10341 / NRRL NRS-1264 / Gibson 46) protein is Spore germination protein GerT (gerT).